A 752-amino-acid polypeptide reads, in one-letter code: Pre-mRNA-processing factor 39 (752 aa).

Positions 1-148 (MEDSGESMTG…DPAAPQEPEL (148 aa)) are disordered. Positions 28–42 (TTGTDDVTGLSTSDL) are enriched in polar residues. 3 stretches are compositionally biased toward low complexity: residues 43 to 56 (TTEQPPESQEQTQP), 76 to 94 (QSASPAEPAAENSEQPPES), and 133 to 148 (EPAAEADPAAPQEPEL). HAT repeat units lie at residues 180–212 (NHLLGSRKAFDAFFLHYPYCYGYWKKYADIERK), 214–246 (GYIQMADEVYRRGLQAIPLSVDLWLHYITFLRE), and 254–289 (EAESRIRASYEHAVLACGTDFRSDRLWEAYIAWETE). Residues 347-374 (NKPSGDEDAETEAPGEELPPGTEDLPDP) are disordered. Positions 352 to 361 (DEDAETEAPG) are enriched in acidic residues. HAT repeat units lie at residues 408–440 (AFEEGIKRPYFHVKALEKTQLNNWREYLDFELE) and 442–474 (GTPERVVVLFERCLIACALYEEFWIKYAKYLES). Basic and acidic residues predominate over residues 678–699 (SFKRKAENGSEEPDAKRQRTDD). Positions 678 to 703 (SFKRKAENGSEEPDAKRQRTDDQSVA) are disordered. The stretch at 700-731 (QSVASGQMMDMQANHAGYNYNNWYQYNSWGSQ) is one HAT 6 repeat.

It belongs to the PRP39 family.

It is found in the nucleus. Involved in pre-mRNA splicing. This is Pre-mRNA-processing factor 39 (prpf39) from Danio rerio (Zebrafish).